The primary structure comprises 498 residues: ATP synthase subunit beta, chloroplastic (498 aa).

An ATP-binding site is contributed by 172–179; sequence GGAGVGKT.

This sequence belongs to the ATPase alpha/beta chains family. F-type ATPases have 2 components, CF(1) - the catalytic core - and CF(0) - the membrane proton channel. CF(1) has five subunits: alpha(3), beta(3), gamma(1), delta(1), epsilon(1). CF(0) has four main subunits: a(1), b(1), b'(1) and c(9-12).

Its subcellular location is the plastid. It localises to the chloroplast thylakoid membrane. The catalysed reaction is ATP + H2O + 4 H(+)(in) = ADP + phosphate + 5 H(+)(out). Its function is as follows. Produces ATP from ADP in the presence of a proton gradient across the membrane. The catalytic sites are hosted primarily by the beta subunits. In Calycanthus floridus var. glaucus (Eastern sweetshrub), this protein is ATP synthase subunit beta, chloroplastic.